The chain runs to 109 residues: Nucleoid-associated protein PM0205 (109 aa).

Belongs to the YbaB/EbfC family. Homodimer.

It localises to the cytoplasm. Its subcellular location is the nucleoid. Functionally, binds to DNA and alters its conformation. May be involved in regulation of gene expression, nucleoid organization and DNA protection. The sequence is that of Nucleoid-associated protein PM0205 from Pasteurella multocida (strain Pm70).